The following is a 246-amino-acid chain: Isoprenyl transferase 1 (246 aa).

The active site involves Asp-19. Asp-19 contributes to the Mg(2+) binding site. Substrate-binding positions include 20 to 23, Trp-24, Arg-32, His-36, and 64 to 66; these read GNGR and STD. Residue Asn-67 is the Proton acceptor of the active site. Substrate-binding positions include Trp-68, Arg-70, Arg-180, and 186-188; that span reads RLS. Glu-199 is a binding site for Mg(2+).

The protein belongs to the UPP synthase family. In terms of assembly, homodimer. The cofactor is Mg(2+).

Functionally, catalyzes the condensation of isopentenyl diphosphate (IPP) with allylic pyrophosphates generating different type of terpenoids. The polypeptide is Isoprenyl transferase 1 (Bradyrhizobium diazoefficiens (strain JCM 10833 / BCRC 13528 / IAM 13628 / NBRC 14792 / USDA 110)).